A 145-amino-acid chain; its full sequence is D-aminoacyl-tRNA deacylase (145 aa).

A Gly-cisPro motif, important for rejection of L-amino acids motif is present at residues 137–138 (GP).

The protein belongs to the DTD family. In terms of assembly, homodimer.

The protein resides in the cytoplasm. The catalysed reaction is glycyl-tRNA(Ala) + H2O = tRNA(Ala) + glycine + H(+). It carries out the reaction a D-aminoacyl-tRNA + H2O = a tRNA + a D-alpha-amino acid + H(+). In terms of biological role, an aminoacyl-tRNA editing enzyme that deacylates mischarged D-aminoacyl-tRNAs. Also deacylates mischarged glycyl-tRNA(Ala), protecting cells against glycine mischarging by AlaRS. Acts via tRNA-based rather than protein-based catalysis; rejects L-amino acids rather than detecting D-amino acids in the active site. By recycling D-aminoacyl-tRNA to D-amino acids and free tRNA molecules, this enzyme counteracts the toxicity associated with the formation of D-aminoacyl-tRNA entities in vivo and helps enforce protein L-homochirality. This Salmonella enteritidis PT4 (strain P125109) protein is D-aminoacyl-tRNA deacylase.